Reading from the N-terminus, the 138-residue chain is Probable histone H2AXb (138 aa).

The segment covering 1–10 has biased composition (gly residues); that stretch reads MSSAGGGGGR. A disordered region spans residues 1–24; that stretch reads MSSAGGGGGRGKSKGSKSVSRSSK. A Phosphoserine; by ATM and ATR modification is found at serine 135. The [ST]-Q motif motif lies at 135-136; the sequence is SQ.

Belongs to the histone H2A family. In terms of assembly, the nucleosome is a histone octamer containing two molecules each of H2A, H2B, H3 and H4 assembled in one H3-H4 heterotetramer and two H2A-H2B heterodimers. The octamer wraps approximately 147 bp of DNA. Interacts with numerous proteins required for DNA damage signaling and repair when phosphorylated on Ser-135. Phosphorylated to form H2AXS139ph (gamma-H2AX) in response to DNA double strand breaks (DSBs) generated by exogenous genotoxic agents and by stalled replication forks, and may also occur during meiotic recombination events. Phosphorylation can extend up to several thousand nucleosomes from the actual site of the DSB and may mark the surrounding chromatin for recruitment of proteins required for DNA damage signaling and repair. Widespread phosphorylation may also serve to amplify the damage signal or aid repair of persistent lesions. H2AXS139ph in response to ionizing radiation is mediated by ATM while defects in DNA replication induce H2AXS139ph subsequent to activation of ATR. Dephosphorylation of H2AXS139ph by PP2A is required for DNA DSB repair.

The protein localises to the nucleus. Its subcellular location is the chromosome. Its function is as follows. Variant histone H2A which replaces conventional H2A in a subset of nucleosomes. Nucleosomes wrap and compact DNA into chromatin, limiting DNA accessibility to the cellular machineries which require DNA as a template. Histones thereby play a central role in transcription regulation, DNA repair, DNA replication and chromosomal stability. DNA accessibility is regulated via a complex set of post-translational modifications of histones, also called histone code, and nucleosome remodeling. Required for checkpoint-mediated arrest of cell cycle progression in response to low doses of ionizing radiation and for efficient repair of DNA double strand breaks (DSBs) specifically when modified by C-terminal phosphorylation. The polypeptide is Probable histone H2AXb (Oryza sativa subsp. indica (Rice)).